The sequence spans 395 residues: MCDQTFLVNVFGSCDKCFKQRALRPVFKKSQQLSYCSTCAEIMATEGLHENETLASLKSEAESLKGKLEEERAKLHDVELHQVAERVEALGQFVMKTRRTLKGHGNKVLCMDWCKDKRRIVSSSQDGKVIVWDSFTTNKEHAVTMPCTWVMACAYAPSGCAIACGGLDNKCSVYPLTFDKNENMAAKKKSVAMHTNYLSACSFTNSDMQILTASGDGTCALWDVESGQLLQSFHGHGADVLCLDLAPSETGNTFVSGGCDKKAMVWDMRSGQCVQAFETHESDINSVRYYPSGDAFASGSDDATCRLYDLRADREVAIYSKESIIFGASSVDFSLSGRLLFAGYNDYTINVWDVLKGSRVSILFGHENRVSTLRVSPDGTAFCSGSWDHTLRVWA.

7 WD repeats span residues 103 to 142, 145 to 184, 193 to 234, 236 to 278, 279 to 318, 320 to 362, and 365 to 394; these read GHGNKVLCMDWCKDKRRIVSSSQDGKVIVWDSFTTNKEHA, MPCTWVMACAYAPSGCAIACGGLDNKCSVYPLTFDKNENM, MHTN…QSFH, HGAD…QAFE, THESDINSVRYYPSGDAFASGSDDATCRLYDLRADREVAI, SKES…RVSI, and GHENRVSTLRVSPDGTAFCSGSWDHTLRVW.

This sequence belongs to the WD repeat G protein beta family. In terms of assembly, component of a complex composed of RGS9 (isoform RGS9-1), GNB5 and RGS9BP; within this complex, the presence of GNB5 stabilizes both itself and RGS9 and increases RGS9 GTPase-activating protein (GAP) activity. Interacts with RGS7, forming the RGS7-GNB5 complex; within this complex, the presence of GNB5 increases RGS7 GTPase-activating protein (GAP) activity. Interacts with GPR158; promotes the GTPase activator activity of the RGS7-GNB5 complex in absence of glycine, in contrast GTPase activator activity of the RGS7-GNB5 complex is inhibited in presence of glycine. Interacts with RGS6. Widely expressed.

It is found in the membrane. Functionally, enhances GTPase-activating protein (GAP) activity of regulator of G protein signaling (RGS) proteins, such as RGS7 and RGS9, hence involved in the termination of the signaling initiated by the G protein coupled receptors (GPCRs) by accelerating the GTP hydrolysis on the G-alpha subunits, thereby promoting their inactivation. Increases RGS7 GTPase-activating protein (GAP) activity, thereby regulating mood and cognition. Increases RGS9 GTPase-activating protein (GAP) activity, hence contributes to the deactivation of G protein signaling initiated by D(2) dopamine receptors. May play an important role in neuronal signaling, including in the parasympathetic, but not sympathetic, control of heart rate. The sequence is that of Guanine nucleotide-binding protein subunit beta-5 (GNB5) from Homo sapiens (Human).